Here is a 250-residue protein sequence, read N- to C-terminus: 5-oxoprolinase subunit A (250 aa).

This sequence belongs to the LamB/PxpA family. In terms of assembly, forms a complex composed of PxpA, PxpB and PxpC.

The enzyme catalyses 5-oxo-L-proline + ATP + 2 H2O = L-glutamate + ADP + phosphate + H(+). In terms of biological role, catalyzes the cleavage of 5-oxoproline to form L-glutamate coupled to the hydrolysis of ATP to ADP and inorganic phosphate. In Thermus thermophilus (strain ATCC 27634 / DSM 579 / HB8), this protein is 5-oxoprolinase subunit A.